The chain runs to 150 residues: Cell division protein SepF (150 aa).

This sequence belongs to the SepF family. Homodimer. Interacts with FtsZ.

The protein resides in the cytoplasm. Cell division protein that is part of the divisome complex and is recruited early to the Z-ring. Probably stimulates Z-ring formation, perhaps through the cross-linking of FtsZ protofilaments. Its function overlaps with FtsA. This Clostridium botulinum (strain ATCC 19397 / Type A) protein is Cell division protein SepF.